Consider the following 520-residue polypeptide: MTTQTMTAVSGNDGDTGGDAAESPPGGPLLALDGITVTFPGVRALDAVSLSVRAGEVHGLMGENGAGKSTLLKVLSGVNQPQAGTLTLNGTEQRFASTRAALEAGIAIIYQELHLVPELTVAENLMLGQLPSRLGVVDERTLAARALDALERLGEHIDPGIPVKYLSIGQRQMIEIGKALMRDARVIAFDEPTSSLSARETTQLFRIIRALRAEGRAIIYVTHRMEEVYELCDRVTVFRDGRRIDTFDSVTDLDRDRLIGCMVGRSIEDVYGYRPRAAGDVLIEAKGLAGPGLSEPVSFTARRGEIVGFFGLVGAGRSELMKLLYGAARPSAGHVELNGKRVAFGSPRDAVRAGLALCPEDRKQEGIVAIASVADNLNISARRHFSPARVLLDGRRERELAQRYIERLAIKTRDGDTPIGALSGGNQQKVVLARWLAERIDVFLMDEPTRGIDVGARAEIYNLFYELAEAGRTVILVSSDLAEVIGVSDRIIVMKEGRIAGEVAKAHATPDALIKLALPR.

The segment covering M1–S10 has biased composition (polar residues). The tract at residues M1–G27 is disordered. ABC transporter domains lie at L30 to R265 and R265 to L516. Position 62–69 (G62–S69) interacts with ATP.

It belongs to the ABC transporter superfamily. Arabinose importer (TC 3.A.1.2.2) family. The complex is composed of two ATP-binding proteins (AraG), two transmembrane proteins (AraH) and a solute-binding protein (AraF).

The protein resides in the cell inner membrane. It catalyses the reaction L-arabinose(out) + ATP + H2O = L-arabinose(in) + ADP + phosphate + H(+). Part of the ABC transporter complex AraFGH involved in L-arabinose import. Responsible for energy coupling to the transport system. The sequence is that of Arabinose import ATP-binding protein AraG from Azospirillum brasilense.